Reading from the N-terminus, the 418-residue chain is AP-3 complex subunit mu-1 (418 aa).

In terms of domain architecture, MHD spans 176–417; sequence NNEAYFDVIE…ITKAGKFQVR (242 aa).

The protein belongs to the adaptor complexes medium subunit family. The AP-3 complex associates with the BLOC-1 complex.

It localises to the golgi apparatus. The protein localises to the cytoplasmic vesicle membrane. Its function is as follows. Part of the AP-3 complex, an adaptor-related complex which is not clathrin-associated. The complex is associated with the Golgi region as well as more peripheral structures. It facilitates the budding of vesicles from the Golgi membrane and may be directly involved in trafficking to lysosomes. In concert with the BLOC-1 complex, AP-3 is required to target cargos into vesicles assembled at cell bodies for delivery into neurites and nerve terminals. This Gallus gallus (Chicken) protein is AP-3 complex subunit mu-1 (AP3M1).